Consider the following 313-residue polypeptide: Porphobilinogen deaminase (313 aa).

Cysteine 242 is subject to S-(dipyrrolylmethanemethyl)cysteine.

Belongs to the HMBS family. As to quaternary structure, monomer. It depends on dipyrromethane as a cofactor.

It carries out the reaction 4 porphobilinogen + H2O = hydroxymethylbilane + 4 NH4(+). Its pathway is porphyrin-containing compound metabolism; protoporphyrin-IX biosynthesis; coproporphyrinogen-III from 5-aminolevulinate: step 2/4. Functionally, tetrapolymerization of the monopyrrole PBG into the hydroxymethylbilane pre-uroporphyrinogen in several discrete steps. The sequence is that of Porphobilinogen deaminase from Pseudomonas aeruginosa (strain LESB58).